A 110-amino-acid polypeptide reads, in one-letter code: UPF0122 protein BCA_3946 (110 aa).

The protein belongs to the UPF0122 family.

Functionally, might take part in the signal recognition particle (SRP) pathway. This is inferred from the conservation of its genetic proximity to ftsY/ffh. May be a regulatory protein. This Bacillus cereus (strain 03BB102) protein is UPF0122 protein BCA_3946.